The primary structure comprises 804 residues: Leucine--tRNA ligase (804 aa).

Positions 40–51 (PYPSGAGLHVGH) match the 'HIGH' region motif. The 'KMSKS' region motif lies at 576 to 580 (KMSKS). K579 is an ATP binding site.

This sequence belongs to the class-I aminoacyl-tRNA synthetase family.

Its subcellular location is the cytoplasm. It catalyses the reaction tRNA(Leu) + L-leucine + ATP = L-leucyl-tRNA(Leu) + AMP + diphosphate. The polypeptide is Leucine--tRNA ligase (Bacillus velezensis (strain DSM 23117 / BGSC 10A6 / LMG 26770 / FZB42) (Bacillus amyloliquefaciens subsp. plantarum)).